We begin with the raw amino-acid sequence, 24 residues long: Lectin (24 aa).

Belongs to the leguminous lectin family. Homotetramer.

In terms of biological role, agglutinates erythrocytes of blood group A. Binds in decreasing order of affinity: N-acetyl-D-galactosamine, D-galactose, and D-galactosamine. The polypeptide is Lectin (Crotalaria pallida (Smooth rattlebox)).